The primary structure comprises 446 residues: Exodeoxyribonuclease 7 large subunit (446 aa).

Belongs to the XseA family. Heterooligomer composed of large and small subunits.

The protein localises to the cytoplasm. The catalysed reaction is Exonucleolytic cleavage in either 5'- to 3'- or 3'- to 5'-direction to yield nucleoside 5'-phosphates.. Its function is as follows. Bidirectionally degrades single-stranded DNA into large acid-insoluble oligonucleotides, which are then degraded further into small acid-soluble oligonucleotides. This is Exodeoxyribonuclease 7 large subunit from Ligilactobacillus salivarius (strain UCC118) (Lactobacillus salivarius).